The chain runs to 229 residues: uncharacterized protein (229 aa).

The S4 RNA-binding domain occupies 2–69; it reads QRLAKLISNA…KSRLWIYYKP (68 aa). The Nucleophile role is filled by aspartate 102.

It belongs to the pseudouridine synthase RsuA family.

It carries out the reaction a uridine in RNA = a pseudouridine in RNA. This is an uncharacterized protein from Rickettsia bellii (strain RML369-C).